Consider the following 103-residue polypeptide: MNRPWKKSDDHVRLAIRLTPNGGRDAIDGAETDGEGEAYLKTRVTTVPEKGKANKALILLIAKSLGIAKSSVSLVSGDTARKKILRIDGDPEDLGKKLETLLG.

It belongs to the UPF0235 family.

The chain is UPF0235 protein Rleg2_3707 from Rhizobium leguminosarum bv. trifolii (strain WSM2304).